The primary structure comprises 423 residues: CinA-like protein (423 aa).

Belongs to the CinA family.

The polypeptide is CinA-like protein (Chlorobium phaeobacteroides (strain DSM 266 / SMG 266 / 2430)).